The following is a 171-amino-acid chain: MTSLLITGYKSFELGVFKDKDPKVNIIKKAIKRDLKRFLDEGVDWMIFTGNLGFEFWALEVAKELQKDYPLRLATLFPFETHGQNWSEANQEKLAAFKQVDFVKYSFPAYQSPAQFKQFNQFLIDNTDQAYLFYEPENETNLKYFYNMIIAASDYPLFRLTFDDLNEVMSE.

Belongs to the UPF0398 family.

The chain is UPF0398 protein STER_0279 from Streptococcus thermophilus (strain ATCC BAA-491 / LMD-9).